A 359-amino-acid polypeptide reads, in one-letter code: Type-1 angiotensin II receptor (359 aa).

Residues 1 to 25 (MVPNYSTEETVKRIHVDCPVSGRHS) lie on the Extracellular side of the membrane. An N-linked (GlcNAc...) asparagine glycan is attached at Asn-4. Asp-17 contacts angiotensin II. Cystine bridges form between Cys-18-Cys-274 and Cys-101-Cys-180. The chain crosses the membrane as a helical span at residues 26 to 55 (YIYIMVPTVYSIIFIIGIFGNSLVVIVIYC). Residues 56–61 (YMKLKT) are Cytoplasmic-facing. The chain crosses the membrane as a helical span at residues 62–89 (VASIFLLNLALADLCFLITLPLWAAYTA). Residues 90 to 98 (MEYQWPFGN) are Extracellular-facing. Residues 99–125 (CLCKLASAGISFNLYASVFLLTCLSID) form a helical membrane-spanning segment. The Cytoplasmic portion of the chain corresponds to 126-141 (RYLAIVHPVKSRIRRT). The chain crosses the membrane as a helical span at residues 142–165 (MFVARVTCIVIWLLAGVASLPVII). Residues 166–190 (HRNIFFAENLNMTVCGFRYDNNNTT) lie on the Extracellular side of the membrane. Angiotensin II is bound at residue Arg-167. N-linked (GlcNAc...) asparagine glycosylation is present at Asn-176. Residues Phe-182 and Tyr-184 each coordinate angiotensin II. Residues Asn-187 and Asn-188 are each glycosylated (N-linked (GlcNAc...) asparagine). Residues 191–216 (LRVGLGLSKNLLGFLIPFLIILTSYT) traverse the membrane as a helical segment. Lys-199 provides a ligand contact to angiotensin II. Over 217-239 (LIWKTLKKAYQIQRNKTRNDDIF) the chain is Cytoplasmic. Residues 240–268 (KMIVAIVFFFFFSWIPHQVFTFLDVLIQL) form a helical membrane-spanning segment. The Extracellular portion of the chain corresponds to 269–278 (HVITDCKITD). Residues 279-304 (IVDTAMPFTICIAYFNNCLNPFFYVF) form a helical membrane-spanning segment. Residues 305-359 (FGKNFKKYFLQLIKYIPPNVSTHPSLTTKMSSLSYRPPENIRLPTKKTAGSFDTE) are Cytoplasmic-facing.

It belongs to the G-protein coupled receptor 1 family. In terms of processing, C-terminal Ser or Thr residues may be phosphorylated. In terms of tissue distribution, adrenal medulla.

The protein resides in the cell membrane. Receptor for angiotensin II, a vasoconstricting peptide, which acts as a key regulator of blood pressure and sodium retention by the kidney. The activated receptor in turn couples to G-alpha proteins G(q) (GNAQ, GNA11, GNA14 or GNA15) and thus activates phospholipase C and increases the cytosolic Ca(2+) concentrations, which in turn triggers cellular responses such as stimulation of protein kinase C. This chain is Type-1 angiotensin II receptor (AGTR1), found in Meleagris gallopavo (Wild turkey).